Here is a 202-residue protein sequence, read N- to C-terminus: Endothelin-1 (202 aa).

The first 25 residues, 1 to 25 (MDYLPVLFSLLLVVFQGAPEAAVLG), serve as a signal peptide directing secretion. The propeptide occupies 26 to 50 (AELSTGPDSGGEKPAPSAPWRPRRS). The disordered stretch occupies residues 28-48 (LSTGPDSGGEKPAPSAPWRPR). Disulfide bonds link C53–C67 and C55–C63. A propeptide spanning residues 74-202 (VNTPEHIVPY…EKKVTHNRTH (129 aa)) is cleaved from the precursor. The interval 110–124 (CQCASQKDKKCWTFC) is endothelin-like.

Belongs to the endothelin/sarafotoxin family.

Its subcellular location is the secreted. Functionally, endothelins are endothelium-derived vasoconstrictor peptides. Probable ligand for G-protein coupled receptors EDNRA and EDNRB which activates PTK2B, BCAR1, BCAR3 and, GTPases RAP1 and RHOA cascade in glomerular mesangial cells. Also binds the DEAR/FBXW7-AS1 receptor. Promotes mesenteric arterial wall remodeling via activation of ROCK signaling and subsequent colocalization of NFATC3 with F-actin filaments. NFATC3 then translocates to the nucleus where it subsequently promotes the transcription of the smooth muscle hypertrophy and differentiation marker ACTA2. The polypeptide is Endothelin-1 (EDN1) (Felis catus (Cat)).